We begin with the raw amino-acid sequence, 598 residues long: Arginine--tRNA ligase (598 aa).

The 'HIGH' region motif lies at 131–141 (ANPTGPMHVGH). Residues 288-308 (KLPPPKSKKGQPPAQPQPDEE) form a disordered region.

This sequence belongs to the class-I aminoacyl-tRNA synthetase family. As to quaternary structure, monomer.

It localises to the cytoplasm. It carries out the reaction tRNA(Arg) + L-arginine + ATP = L-arginyl-tRNA(Arg) + AMP + diphosphate. The protein is Arginine--tRNA ligase of Anaeromyxobacter sp. (strain K).